The chain runs to 179 residues: ATP synthase subunit delta 2 (179 aa).

The protein belongs to the ATPase delta chain family. F-type ATPases have 2 components, F(1) - the catalytic core - and F(0) - the membrane proton channel. F(1) has five subunits: alpha(3), beta(3), gamma(1), delta(1), epsilon(1). F(0) has three main subunits: a(1), b(2) and c(10-14). The alpha and beta chains form an alternating ring which encloses part of the gamma chain. F(1) is attached to F(0) by a central stalk formed by the gamma and epsilon chains, while a peripheral stalk is formed by the delta and b chains.

The protein resides in the cell inner membrane. Its function is as follows. F(1)F(0) ATP synthase produces ATP from ADP in the presence of a proton or sodium gradient. F-type ATPases consist of two structural domains, F(1) containing the extramembraneous catalytic core and F(0) containing the membrane proton channel, linked together by a central stalk and a peripheral stalk. During catalysis, ATP synthesis in the catalytic domain of F(1) is coupled via a rotary mechanism of the central stalk subunits to proton translocation. In terms of biological role, this protein is part of the stalk that links CF(0) to CF(1). It either transmits conformational changes from CF(0) to CF(1) or is implicated in proton conduction. This Syntrophotalea carbinolica (strain DSM 2380 / NBRC 103641 / GraBd1) (Pelobacter carbinolicus) protein is ATP synthase subunit delta 2.